A 763-amino-acid polypeptide reads, in one-letter code: MSELLSFALFLASVLIYAWKAGRNTWWFAATLTVLGLFVVLNITLFASDYFTGAGINDAVLYTLTNSLTGAGVSKYILPGIGIVLGLTAVFGALGWILRRRRHHPHHFGYSLLALLLALGSVDASPAFRQITELVKSQSRDGDPDFAAYYKEPSKTIPDPKLNLVYIYGESLERTYFDNEAFPDLTPELGALKNEGLDFSHTQQLPGTDYTIAGMVASQCGIPLFAPFEGNASASVSSFFPQNICLGDILKNSGYQNYFVQGANLRFAGKDVFLKSHGFDHLYGSEELKSVVADPHYRNDWGFYDDTVLDEAWKKFEELSRSGQRFSLFTLTVDTHHPDGFISRTCNRKKYDFDGKPNQSFSAVSCSQENIAAFINKIKASPWFKDTVIVVSSDHLAMNNTAWKYLNKQDRNNLFFVIRGDKPQQETLAVKRNTMDNGATVLDILGGDNYLGLGRSSLSGQSMSEIFLNIKEKTLAWKPDIIRLWKFPKEMKEFTIDQQKNIIAFSGSHFRLPLLLRVSDKRVEPLPESEYSAPLRFQLADFAPRDNFVWVDRCYKMAQLWAPELALSTDWCVSQGQLGGQQIVQHVDKTTWQGKTAFKDTVIDMARYKGNVDTLKIVDNDIRYKADSFIFNVAGAPEEVKQFSGISRPESWGRWSNAQLGDEVKIEYKHPLPKKFDLVITAKAYGNNASRPIPVRVGNEEQTLVLGNEVTTTTLHFDNPTDADTLVIVPPEPVSTNEGNILGHSPRKLGIGMVEIKVVEREG.

The next 4 helical transmembrane spans lie at 1-21 (MSEL…AWKA), 26-46 (WWFA…ITLF), 77-97 (ILPG…LGWI), and 108-128 (FGYS…SPAF).

The protein belongs to the OpgB family.

Its subcellular location is the cell inner membrane. It catalyses the reaction a phosphatidylglycerol + a membrane-derived-oligosaccharide D-glucose = a 1,2-diacyl-sn-glycerol + a membrane-derived-oligosaccharide 6-(glycerophospho)-D-glucose.. It functions in the pathway glycan metabolism; osmoregulated periplasmic glucan (OPG) biosynthesis. Transfers a phosphoglycerol residue from phosphatidylglycerol to the membrane-bound nascent glucan backbones. This chain is Phosphoglycerol transferase I, found in Escherichia coli O139:H28 (strain E24377A / ETEC).